We begin with the raw amino-acid sequence, 813 residues long: G-type lectin S-receptor-like serine/threonine-protein kinase LECRK1 (813 aa).

Positions M1 to A19 are cleaved as a signal peptide. Topologically, residues Q20–S466 are extracellular. One can recognise a Bulb-type lectin domain in the interval Q22–D149. N-linked (GlcNAc...) asparagine glycosylation is found at N24, N57, N164, N168, N219, and N242. The EGF-like; atypical domain occupies P293–K346. 5 disulfide bridges follow: C297/C315, C309/C327, C329/C345, C391/C413, and C395/C401. Residues C354–V433 form the PAN domain. N-linked (GlcNAc...) asparagine glycans are attached at residues N407 and N441. A helical membrane pass occupies residues L467–T487. Residues Y488–P813 are Cytoplasmic-facing. The region spanning A523 to V797 is the Protein kinase domain. ATP-binding positions include L529–V537 and K553. The active-site Proton acceptor is D647.

This sequence belongs to the protein kinase superfamily. Ser/Thr protein kinase family.

Its subcellular location is the membrane. The enzyme catalyses L-seryl-[protein] + ATP = O-phospho-L-seryl-[protein] + ADP + H(+). It carries out the reaction L-threonyl-[protein] + ATP = O-phospho-L-threonyl-[protein] + ADP + H(+). Involved in innate immunity. Required for the expression of defense-related genes PR1A, LOX2 and CHS1 upon biotic stresses. Required for basal resistance to the fungal blast (M.grisea), bacterial blight (X.oryzae pv. oryzae, Xoo) and the herbivorous insect brown planthopper (N.lugens, BPH). May be involved in several defense signaling pathways. Involved in the promotion of seed germination. Required for the expression of alpha-amylase genes during seed germination. Involved in resistance against the herbivorous insect brown planthopper (N.lugens, BPH). Member of the BPH3 (BPH resistance locus 3) cluster which contains LECRK1, LECRK2 and LECRK3. This is G-type lectin S-receptor-like serine/threonine-protein kinase LECRK1 from Oryza sativa subsp. japonica (Rice).